Here is a 388-residue protein sequence, read N- to C-terminus: Galactokinase (388 aa).

33-36 (EHTD) is a substrate binding site. ATP contacts are provided by residues S67 and 124–130 (GAGLSSS). Residues S130 and E162 each coordinate Mg(2+). Residue D174 is the Proton acceptor of the active site. Residue Y224 participates in substrate binding.

Belongs to the GHMP kinase family. GalK subfamily.

The protein localises to the cytoplasm. It carries out the reaction alpha-D-galactose + ATP = alpha-D-galactose 1-phosphate + ADP + H(+). It participates in carbohydrate metabolism; galactose metabolism. Functionally, catalyzes the transfer of the gamma-phosphate of ATP to D-galactose to form alpha-D-galactose-1-phosphate (Gal-1-P). The protein is Galactokinase of Lacticaseibacillus paracasei (strain ATCC 334 / BCRC 17002 / CCUG 31169 / CIP 107868 / KCTC 3260 / NRRL B-441) (Lactobacillus paracasei).